The sequence spans 346 residues: Serine/threonine-protein phosphatase PP1(4.8) (346 aa).

Residues 46-65 are disordered; the sequence is QSAQTQESTPKTNGTGRATT. 4 residues coordinate Mn(2+): D102, H104, D130, and N162. H163 functions as the Proton donor in the catalytic mechanism. Mn(2+) contacts are provided by H211 and H287.

It belongs to the PPP phosphatase family. PP-1 subfamily. Mn(2+) is required as a cofactor.

It carries out the reaction O-phospho-L-seryl-[protein] + H2O = L-seryl-[protein] + phosphate. It catalyses the reaction O-phospho-L-threonyl-[protein] + H2O = L-threonyl-[protein] + phosphate. The protein is Serine/threonine-protein phosphatase PP1(4.8) of Trypanosoma brucei brucei.